The primary structure comprises 188 residues: Cytochrome b-245 chaperone 1 homolog (188 aa).

The helical transmembrane segment at 20–42 threads the bilayer; sequence SIRSWSLLVGILSVGLAAAYYST.

It belongs to the CYBC1 family.

It is found in the endoplasmic reticulum membrane. Functions as a chaperone necessary for a stable expression of the CYBA and CYBB subunits of the cytochrome b-245 heterodimer. This Xenopus laevis (African clawed frog) protein is Cytochrome b-245 chaperone 1 homolog (cybc1).